Here is a 177-residue protein sequence, read N- to C-terminus: Large ribosomal subunit protein uL6 (177 aa).

The tract at residues 154–177 (PEPYKGKGVRYADEQVRRKEAKKK) is disordered. Positions 155 to 171 (EPYKGKGVRYADEQVRR) are enriched in basic and acidic residues.

It belongs to the universal ribosomal protein uL6 family. In terms of assembly, part of the 50S ribosomal subunit.

This protein binds to the 23S rRNA, and is important in its secondary structure. It is located near the subunit interface in the base of the L7/L12 stalk, and near the tRNA binding site of the peptidyltransferase center. The protein is Large ribosomal subunit protein uL6 of Alcanivorax borkumensis (strain ATCC 700651 / DSM 11573 / NCIMB 13689 / SK2).